Consider the following 80-residue polypeptide: Large ribosomal subunit protein bL31B (80 aa).

It belongs to the bacterial ribosomal protein bL31 family. Type B subfamily. As to quaternary structure, part of the 50S ribosomal subunit.

This chain is Large ribosomal subunit protein bL31B, found in Shouchella clausii (strain KSM-K16) (Alkalihalobacillus clausii).